The primary structure comprises 73 residues: Conotoxin reg3a (73 aa).

A signal peptide spans 1 to 20; that stretch reads MMSKLRVLLTICLLLFPLSA. Residues 21-55 constitute a propeptide that is removed on maturation; sequence LPLDGDQPADQPAKRMWNGKLAARKPRFDKYDLVR. A 4-hydroxyproline mark is found at proline 59, proline 60, proline 65, and proline 70. Cysteine 72 is modified (cysteine amide).

Contains 3 disulfide bonds. As to expression, expressed by the venom duct.

Its subcellular location is the secreted. The polypeptide is Conotoxin reg3a (Conus regius (Crown cone)).